We begin with the raw amino-acid sequence, 218 residues long: 3,4-dihydroxy-2-butanone 4-phosphate synthase (218 aa).

D-ribulose 5-phosphate-binding positions include 38–39 (RE), aspartate 43, 151–155 (RRGHT), and glutamate 175. Residue glutamate 39 participates in Mg(2+) binding. Residue histidine 154 participates in Mg(2+) binding.

This sequence belongs to the DHBP synthase family. Homodimer. Requires Mg(2+) as cofactor. Mn(2+) is required as a cofactor.

It catalyses the reaction D-ribulose 5-phosphate = (2S)-2-hydroxy-3-oxobutyl phosphate + formate + H(+). Its pathway is cofactor biosynthesis; riboflavin biosynthesis; 2-hydroxy-3-oxobutyl phosphate from D-ribulose 5-phosphate: step 1/1. Its function is as follows. Catalyzes the conversion of D-ribulose 5-phosphate to formate and 3,4-dihydroxy-2-butanone 4-phosphate. The polypeptide is 3,4-dihydroxy-2-butanone 4-phosphate synthase (Shewanella frigidimarina (strain NCIMB 400)).